A 429-amino-acid chain; its full sequence is Violacein synthase (429 aa).

3–21 (RAIIVGGGLAGGLTAIYLA) provides a ligand contact to FAD.

FAD is required as a cofactor.

It carries out the reaction protoviolaceinate + NADPH + O2 + H(+) = violaceinate + NADP(+) + H2O. It catalyses the reaction protoviolaceinate + NADH + O2 + H(+) = violaceinate + NAD(+) + H2O. The catalysed reaction is protodeoxyviolaceinate + NADPH + O2 + H(+) = deoxyviolaceinate + NADP(+) + H2O. The enzyme catalyses protodeoxyviolaceinate + NADH + O2 + H(+) = deoxyviolaceinate + NAD(+) + H2O. Its pathway is pigment biosynthesis; violacein biosynthesis. Functionally, catalyzes the hydroxylation of the 16-position of protoviolaceinate and protodeoxyviolaceinate to form violacein and deoxyviolacein, respectively. In Chromobacterium violaceum (strain ATCC 12472 / DSM 30191 / JCM 1249 / CCUG 213 / NBRC 12614 / NCIMB 9131 / NCTC 9757 / MK), this protein is Violacein synthase (vioC).